The following is a 119-amino-acid chain: Large ribosomal subunit protein bL17 (119 aa).

Belongs to the bacterial ribosomal protein bL17 family. As to quaternary structure, part of the 50S ribosomal subunit. Contacts protein L32.

The chain is Large ribosomal subunit protein bL17 from Mycoplasma mycoides subsp. mycoides SC (strain CCUG 32753 / NCTC 10114 / PG1).